The sequence spans 637 residues: MWKFTSSATKRIGNSLSSNNNNGSLLFSLNFNGSNNNNNNESSKPITAANTQNNSTTKSIDNNNNNTNNSNSNNNNNDNIKNNNKFNRASHRSNITLVAINNKDISQMTNLLADSGISVSKISNKKISLASKINTLNKLNSSLLHLNSINNSLTNSNNNNDNNNLIDNNNNDNYNNDSISSSSSSSSLSESSQTLSSASSSASSSSSSTLSSSSSVSSKSLNNNNNNNNSRFNNEFNDVRVLGKGGFGIVFQCCNIFDQMEYAVKRIKVNQKIPTKELMEVRAMARLNHPNIVRYYGSWIEEEIITNNSIDHYGENDNNLFENIDSFPSSSYSSVSAAASSSSLVSNSSNSYSNNKATYISNSSSSSSSSSSCSYSIGNGNLSISECTNDDNNNYNQLKQKKFSLYIQMELCKYSTLRNLINEINNIKSITSIQSTSSIANPIGTNILISLDIKQCREITRQILVALKYIHSQGFVHRDITPDNVFVCQSPFGIKIGDFGLATTIESLTVDSNNNNNNNINNNNNNNKKVGGLGTYLYSSNEQEQGDNYNQKTDLYSVGVIFFEMLSQFKTTMERSTTLSKLKKSLSVLKTNPNLKQKYPNDTDFIDHLIQSFATRPFSNQISTDYDNFPPKNFLIN.

Disordered stretches follow at residues asparagine 36–arginine 88 and asparagine 155–asparagine 234. Residues asparagine 53 to lysine 85 show a composition bias toward low complexity. Residues phenylalanine 236 to phenylalanine 629 enclose the Protein kinase domain. ATP is bound by residues leucine 242–valine 250 and lysine 265. Aspartate 479 serves as the catalytic Proton acceptor.

This sequence belongs to the protein kinase superfamily. Ser/Thr protein kinase family. GCN2 subfamily.

It catalyses the reaction L-seryl-[protein] + ATP = O-phospho-L-seryl-[protein] + ADP + H(+). The enzyme catalyses L-threonyl-[protein] + ATP = O-phospho-L-threonyl-[protein] + ADP + H(+). This chain is Probable serine/threonine-protein kinase DDB_G0283065, found in Dictyostelium discoideum (Social amoeba).